A 143-amino-acid chain; its full sequence is Large ribosomal subunit protein uL11 (143 aa).

It belongs to the universal ribosomal protein uL11 family. In terms of assembly, part of the ribosomal stalk of the 50S ribosomal subunit. Interacts with L10 and the large rRNA to form the base of the stalk. L10 forms an elongated spine to which L12 dimers bind in a sequential fashion forming a multimeric L10(L12)X complex. Post-translationally, one or more lysine residues are methylated.

In terms of biological role, forms part of the ribosomal stalk which helps the ribosome interact with GTP-bound translation factors. The polypeptide is Large ribosomal subunit protein uL11 (Leptothrix cholodnii (strain ATCC 51168 / LMG 8142 / SP-6) (Leptothrix discophora (strain SP-6))).